The following is a 227-amino-acid chain: MSLSNSLGLLGRKVGMMRLFTDDGDTVPVTVVDVSNNRVTQVKTEANDGYDALQVAFGARKASRVTKPAAGHLAKAGVEAGEILKEFRVTADVAGKYAAGTVVPAADVFAVGQLVDVQGTSIGKGYAGTIKRHNMSSQRASHGNSRSHNVPGSIGMAQDPGRVFPGKRMTGHLGDVTVTTQNLNIVRIDEARQLLMIRGAVPGSKGGFVTVRAAIKAKPTTAAKGAN.

N5-methylglutamine is present on Gln158.

Belongs to the universal ribosomal protein uL3 family. As to quaternary structure, part of the 50S ribosomal subunit. Forms a cluster with proteins L14 and L19. In terms of processing, methylated by PrmB.

In terms of biological role, one of the primary rRNA binding proteins, it binds directly near the 3'-end of the 23S rRNA, where it nucleates assembly of the 50S subunit. The protein is Large ribosomal subunit protein uL3 of Polaromonas sp. (strain JS666 / ATCC BAA-500).